A 197-amino-acid polypeptide reads, in one-letter code: RNA pyrophosphohydrolase (197 aa).

A Nudix hydrolase domain is found at 6-150; it reads GYRPNVGIVI…KRDVYRKVMR (145 aa). The Nudix box motif lies at 38-59; that stretch reads GGINEGENIETAMYRELYEEVG.

It belongs to the Nudix hydrolase family. RppH subfamily. A divalent metal cation serves as cofactor.

In terms of biological role, accelerates the degradation of transcripts by removing pyrophosphate from the 5'-end of triphosphorylated RNA, leading to a more labile monophosphorylated state that can stimulate subsequent ribonuclease cleavage. This Haemophilus ducreyi (strain 35000HP / ATCC 700724) protein is RNA pyrophosphohydrolase.